The sequence spans 449 residues: Exodeoxyribonuclease 7 large subunit (449 aa).

It belongs to the XseA family. In terms of assembly, heterooligomer composed of large and small subunits.

The protein resides in the cytoplasm. It catalyses the reaction Exonucleolytic cleavage in either 5'- to 3'- or 3'- to 5'-direction to yield nucleoside 5'-phosphates.. In terms of biological role, bidirectionally degrades single-stranded DNA into large acid-insoluble oligonucleotides, which are then degraded further into small acid-soluble oligonucleotides. This is Exodeoxyribonuclease 7 large subunit from Salmonella schwarzengrund (strain CVM19633).